The primary structure comprises 209 residues: Small ribosomal subunit protein uS4 (209 aa).

Residues 23 to 46 (SRNPLLKKPHPPGQHGMQRKKKSD) form a disordered region. In terms of domain architecture, S4 RNA-binding spans 93 to 156 (CRLDNMVYRM…RKLQSVQESL (64 aa)).

The protein belongs to the universal ribosomal protein uS4 family. In terms of assembly, part of the 30S ribosomal subunit. Contacts protein S5. The interaction surface between S4 and S5 is involved in control of translational fidelity.

Its function is as follows. One of the primary rRNA binding proteins, it binds directly to 16S rRNA where it nucleates assembly of the body of the 30S subunit. In terms of biological role, with S5 and S12 plays an important role in translational accuracy. The polypeptide is Small ribosomal subunit protein uS4 (Chlamydia felis (strain Fe/C-56) (Chlamydophila felis)).